We begin with the raw amino-acid sequence, 474 residues long: Vasculin-like protein 1 (474 aa).

Positions 17–42 are disordered; the sequence is QSAKSPTATFEKHGEHLPRGEGRFGV. Positions 26–38 are enriched in basic and acidic residues; sequence FEKHGEHLPRGEG. 2 positions are modified to phosphoserine: Ser-49 and Ser-76. The segment at 91-191 is disordered; that stretch reads GNPSGWHSSS…VWENPPSAKQ (101 aa). Basic residues predominate over residues 116 to 128; the sequence is NHRHWNGSFHSRK. A compositionally biased stretch (basic and acidic residues) spans 136 to 154; sequence PPMEIREEKKEDKVEKLQF. Ser-202 is modified (phosphoserine). Positions 238 to 371 are disordered; the sequence is LVPKPVPPPS…EEGCHQNGLA (134 aa). Over residues 262–277 the composition is skewed to polar residues; it reads GSLSSSRESAFTSPIS. Over residues 291 to 312 the composition is skewed to low complexity; that stretch reads SSPKESPSSTTPPIEISSSRLT. Ser-292 carries the post-translational modification Phosphoserine. Thr-301 bears the Phosphothreonine mark. 2 stretches are compositionally biased toward basic and acidic residues: residues 317-346 and 356-365; these read RTTDRKSEFLKTLKDDRNGDFSENRDCDKL and EPKENGEEGC. Ser-382 bears the Phosphoserine mark. The segment at 453-474 is disordered; that stretch reads AEFEDSDTETSSSETSDDDAWK.

The protein belongs to the vasculin family.

Its subcellular location is the nucleus. Functionally, possible transcription factor. The protein is Vasculin-like protein 1 (GPBP1L1) of Homo sapiens (Human).